Reading from the N-terminus, the 366-residue chain is MWLEKIDIQHFRNYSEASVSFSPHLNIFLGRNAQGKTNILEAIYFLALTRSHRTHLDKELIQFQQNSLKLNGIVHRHSGNLPLEINLSNKGRVTKVNYLKQAKLSDYIGHMTVVLFAPEDLQLVKGSPSLRRKFIDIDLGQIKPVYLSDLSNYNHVLKQRNAYLKSTDKVDINFLSVLDEQLADFGARVIKHRLEFIKQLEEEADGHHSILSNQIERLKISYESNIPIQNSKDIREAFLTTLNQNHKRDIFKKNTGVGPHRDDLKFYINDMNASFGSQGQQRSLILSLKMAEIALIKKVTEEFPILLLDDVMSELDNHRQLKLLESIDEEVQTFMTTTSLDHLSNLPPNLKTFLVKNGTIYEKQVD.

Residue glycine 30–threonine 37 coordinates ATP.

Belongs to the RecF family.

Its subcellular location is the cytoplasm. Its function is as follows. The RecF protein is involved in DNA metabolism; it is required for DNA replication and normal SOS inducibility. RecF binds preferentially to single-stranded, linear DNA. It also seems to bind ATP. In Streptococcus thermophilus (strain CNRZ 1066), this protein is DNA replication and repair protein RecF.